Here is a 360-residue protein sequence, read N- to C-terminus: Phospho-N-acetylmuramoyl-pentapeptide-transferase (360 aa).

Transmembrane regions (helical) follow at residues 27 to 47 (GAMITSALIVFLFGPSIINSL), 71 to 91 (TPTMGGLMIMTGILVSCLLWA), 93 to 113 (LASVYVWVVLLVTVGFGAIGF), 128 to 148 (FSGKARLGIEFLIAAVAAFVI), 168 to 188 (FVVNLSWFFIPFAAFVMVGAG), 199 to 219 (GLAIVPVMVAAASFGFIAYLS), 239 to 259 (LAVVLGAVIGAGLGFLWFNAP), 262 to 282 (AIFMGDTGSLALGGMLGTVAV), 288 to 308 (IVLAIIGGLFVVEALSVIIQV), and 337 to 357 (QVVIRFWIVAIILAMIGLSTL).

This sequence belongs to the glycosyltransferase 4 family. MraY subfamily. Mg(2+) serves as cofactor.

It localises to the cell inner membrane. The enzyme catalyses UDP-N-acetyl-alpha-D-muramoyl-L-alanyl-gamma-D-glutamyl-meso-2,6-diaminopimeloyl-D-alanyl-D-alanine + di-trans,octa-cis-undecaprenyl phosphate = di-trans,octa-cis-undecaprenyl diphospho-N-acetyl-alpha-D-muramoyl-L-alanyl-D-glutamyl-meso-2,6-diaminopimeloyl-D-alanyl-D-alanine + UMP. The protein operates within cell wall biogenesis; peptidoglycan biosynthesis. Functionally, catalyzes the initial step of the lipid cycle reactions in the biosynthesis of the cell wall peptidoglycan: transfers peptidoglycan precursor phospho-MurNAc-pentapeptide from UDP-MurNAc-pentapeptide onto the lipid carrier undecaprenyl phosphate, yielding undecaprenyl-pyrophosphoryl-MurNAc-pentapeptide, known as lipid I. This chain is Phospho-N-acetylmuramoyl-pentapeptide-transferase, found in Brucella anthropi (strain ATCC 49188 / DSM 6882 / CCUG 24695 / JCM 21032 / LMG 3331 / NBRC 15819 / NCTC 12168 / Alc 37) (Ochrobactrum anthropi).